The primary structure comprises 124 residues: FK506-binding protein 1 (124 aa).

One can recognise a PPIase FKBP-type domain in the interval 23–122 (GDTVTIHYDG…VFEVELLGVN (100 aa)).

Belongs to the FKBP-type PPIase family. FKBP1 subfamily.

The protein resides in the cytoplasm. It catalyses the reaction [protein]-peptidylproline (omega=180) = [protein]-peptidylproline (omega=0). With respect to regulation, inhibited by rapamycin. Functionally, PPIases accelerate the folding of proteins. It catalyzes the cis-trans isomerization of proline imidic peptide bonds in oligopeptides. In Candida albicans (strain SC5314 / ATCC MYA-2876) (Yeast), this protein is FK506-binding protein 1 (RBP1).